Reading from the N-terminus, the 318-residue chain is Olfactory receptor 5G25 (318 aa).

Residues 1-25 lie on the Extracellular side of the membrane; the sequence is MMHRNQTVVTEFFFTGLTSSFHLQI. The N-linked (GlcNAc...) asparagine glycan is linked to Asn-5. A helical transmembrane segment spans residues 26 to 46; the sequence is VLFLTFLCVYLATLLGNLGMI. Topologically, residues 47–54 are cytoplasmic; that stretch reads ILIHQDTR. The helical transmembrane segment at 55 to 75 threads the bilayer; it reads LHIPMYFFLSHLSFVDACSSS. Residues 76-99 lie on the Extracellular side of the membrane; sequence VISPKMLSDIFVDKKVISFLGCAI. An intrachain disulfide couples Cys-97 to Cys-189. Residues 100–120 traverse the membrane as a helical segment; it reads QFCLFSQFVVTECFLLASMAY. At 121–133 the chain is on the cytoplasmic side; that stretch reads DRYVAICKPLLYT. Residues 134-154 form a helical membrane-spanning segment; the sequence is LIMSQRVCVQLVIGPYSIGLI. Topologically, residues 155–196 are extracellular; that stretch reads STVVHTTSAFILPYCGPNLINHFFCDLLPVLSLACADTQMNK. Residues 197 to 217 form a helical membrane-spanning segment; sequence HLLFIMAGILGVFSGIIILVS. At 218-237 the chain is on the cytoplasmic side; that stretch reads YVYIAITILKINSADGRRKA. Residues 238–258 traverse the membrane as a helical segment; the sequence is FSTCSSHLTAVSILYGTLFFI. Residues 259–271 lie on the Extracellular side of the membrane; sequence YVRPSSSFSLDIN. Residues 272 to 292 form a helical membrane-spanning segment; it reads KVVSLFYTAVIPMLNPFIYSL. Topologically, residues 293–318 are cytoplasmic; that stretch reads RNKEVKDALIRTFEKKFCYSLQDKIL.

The protein belongs to the G-protein coupled receptor 1 family.

The protein resides in the cell membrane. In terms of biological role, potential odorant receptor. This Mus musculus (Mouse) protein is Olfactory receptor 5G25.